The chain runs to 181 residues: Transmembrane protein 47 (181 aa).

Alanine 2 carries the post-translational modification N-acetylalanine. Helical transmembrane passes span 21–41, 83–103, 115–135, and 152–172; these read LVGL…VLSP, ALLL…LISI, VAVM…LYPI, and GYGL…LYCL.

This sequence belongs to the TMEM47 family. Interacts with CTNNB1, CTNNA1, PRKCI, PARD6B, FYB1. In terms of tissue distribution, expressed in adult brain, fetal brain, cerebellum, heart, lung, prostate and thyroid.

It is found in the membrane. The protein resides in the cell junction. The protein localises to the adherens junction. Functionally, regulates cell junction organization in epithelial cells. May play a role in the transition from adherens junction to tight junction assembly. May regulate F-actin polymerization required for tight junctional localization dynamics and affect the junctional localization of PARD6B. During podocyte differentiation may negatively regulate activity of FYN and subsequently the abundance of nephrin. The polypeptide is Transmembrane protein 47 (TMEM47) (Homo sapiens (Human)).